The following is a 491-amino-acid chain: La-related protein 6 (491 aa).

The disordered stretch occupies residues M1–P87. Residue A2 is modified to N-acetylalanine. Acidic residues predominate over residues E24–G37. Residues S56 and S58 each carry the phosphoserine modification. Positions K86–P177 constitute an HTH La-type RNA-binding domain. Residues K184–P296 enclose the RRM domain. Residues L186 to L193 carry the Nuclear export signal motif. Disordered stretches follow at residues M293–R403 and S423–V491. Residues P296–K302 carry the Nuclear localization signal motif. The span at D332–P346 shows a compositional bias: low complexity. Polar residues-rich tracts occupy residues N359–L386 and Q444–L453. An SUZ-C domain is found at P427–E485. The span at H482–V491 shows a compositional bias: basic and acidic residues.

Interacts (via the HTH domain) with VIM/vimentin. Interacts (via C-terminus) with non-muscle myosin MYH10. Interacts (via C-terminus) with DHX9. Expressed in numerous tissues.

It is found in the cytoplasm. It localises to the nucleus. Functionally, regulates the coordinated translation of type I collagen alpha-1 and alpha-2 mRNAs, CO1A1 and CO1A2. Stabilizes mRNAs through high-affinity binding of a stem-loop structure in their 5' UTR. This regulation requires VIM and MYH10 filaments, and the helicase DHX9. This chain is La-related protein 6 (LARP6), found in Homo sapiens (Human).